We begin with the raw amino-acid sequence, 606 residues long: Arginine--tRNA ligase (606 aa).

The 'HIGH' region signature appears at 126–136; it reads PNTNKPLHLGH.

Belongs to the class-I aminoacyl-tRNA synthetase family. As to quaternary structure, monomer.

The protein localises to the cytoplasm. It catalyses the reaction tRNA(Arg) + L-arginine + ATP = L-arginyl-tRNA(Arg) + AMP + diphosphate. The polypeptide is Arginine--tRNA ligase (Phocaeicola vulgatus (strain ATCC 8482 / DSM 1447 / JCM 5826 / CCUG 4940 / NBRC 14291 / NCTC 11154) (Bacteroides vulgatus)).